A 122-amino-acid polypeptide reads, in one-letter code: NADH-quinone oxidoreductase subunit A (122 aa).

The next 3 helical transmembrane spans lie at 12–32 (ILLFILVGLAIGVLSMLAGWL), 67–87 (IAILFILFDLEIAFLFPWAVV), and 91–111 (IGWFGFVAMLVFLGLLVVGFI).

It belongs to the complex I subunit 3 family. NDH-1 is composed of 14 different subunits. Subunits NuoA, H, J, K, L, M, N constitute the membrane sector of the complex.

It is found in the cell inner membrane. The enzyme catalyses a quinone + NADH + 5 H(+)(in) = a quinol + NAD(+) + 4 H(+)(out). Its function is as follows. NDH-1 shuttles electrons from NADH, via FMN and iron-sulfur (Fe-S) centers, to quinones in the respiratory chain. The immediate electron acceptor for the enzyme in this species is believed to be ubiquinone. Couples the redox reaction to proton translocation (for every two electrons transferred, four hydrogen ions are translocated across the cytoplasmic membrane), and thus conserves the redox energy in a proton gradient. This chain is NADH-quinone oxidoreductase subunit A, found in Nitrosomonas europaea (strain ATCC 19718 / CIP 103999 / KCTC 2705 / NBRC 14298).